The following is a 101-amino-acid chain: Chaperone modulatory protein CbpM (101 aa).

It belongs to the CbpM family.

In terms of biological role, interacts with CbpA and inhibits both the DnaJ-like co-chaperone activity and the DNA binding activity of CbpA. Together with CbpA, modulates the activity of the DnaK chaperone system. Does not inhibit the co-chaperone activity of DnaJ. The protein is Chaperone modulatory protein CbpM of Salmonella agona (strain SL483).